Reading from the N-terminus, the 240-residue chain is 1-(5-phosphoribosyl)-5-[(5-phosphoribosylamino)methylideneamino] imidazole-4-carboxamide isomerase (240 aa).

Asp8 serves as the catalytic Proton acceptor. The active-site Proton donor is the Asp129.

It belongs to the HisA/HisF family.

Its subcellular location is the cytoplasm. The enzyme catalyses 1-(5-phospho-beta-D-ribosyl)-5-[(5-phospho-beta-D-ribosylamino)methylideneamino]imidazole-4-carboxamide = 5-[(5-phospho-1-deoxy-D-ribulos-1-ylimino)methylamino]-1-(5-phospho-beta-D-ribosyl)imidazole-4-carboxamide. It functions in the pathway amino-acid biosynthesis; L-histidine biosynthesis; L-histidine from 5-phospho-alpha-D-ribose 1-diphosphate: step 4/9. The sequence is that of 1-(5-phosphoribosyl)-5-[(5-phosphoribosylamino)methylideneamino] imidazole-4-carboxamide isomerase from Clostridioides difficile (strain 630) (Peptoclostridium difficile).